Here is a 173-residue protein sequence, read N- to C-terminus: Peptide methionine sulfoxide reductase MsrA (173 aa).

Cys-10 is an active-site residue.

It belongs to the MsrA Met sulfoxide reductase family.

The catalysed reaction is L-methionyl-[protein] + [thioredoxin]-disulfide + H2O = L-methionyl-(S)-S-oxide-[protein] + [thioredoxin]-dithiol. It carries out the reaction [thioredoxin]-disulfide + L-methionine + H2O = L-methionine (S)-S-oxide + [thioredoxin]-dithiol. In terms of biological role, has an important function as a repair enzyme for proteins that have been inactivated by oxidation. Catalyzes the reversible oxidation-reduction of methionine sulfoxide in proteins to methionine. The chain is Peptide methionine sulfoxide reductase MsrA from Nautilia profundicola (strain ATCC BAA-1463 / DSM 18972 / AmH).